The chain runs to 381 residues: 1-deoxy-D-xylulose 5-phosphate reductoisomerase (381 aa).

NADPH is bound by residues threonine 11, glycine 12, serine 13, isoleucine 14, lysine 36, asparagine 37, and asparagine 121. Lysine 122 lines the 1-deoxy-D-xylulose 5-phosphate pocket. Residue glutamate 123 coordinates NADPH. Position 147 (aspartate 147) interacts with Mn(2+). Residues serine 148, glutamate 149, serine 173, and histidine 196 each coordinate 1-deoxy-D-xylulose 5-phosphate. Glutamate 149 contributes to the Mn(2+) binding site. Glycine 202 lines the NADPH pocket. Positions 209, 214, 215, and 218 each coordinate 1-deoxy-D-xylulose 5-phosphate. Glutamate 218 is a Mn(2+) binding site.

It belongs to the DXR family. It depends on Mg(2+) as a cofactor. Requires Mn(2+) as cofactor.

The enzyme catalyses 2-C-methyl-D-erythritol 4-phosphate + NADP(+) = 1-deoxy-D-xylulose 5-phosphate + NADPH + H(+). The protein operates within isoprenoid biosynthesis; isopentenyl diphosphate biosynthesis via DXP pathway; isopentenyl diphosphate from 1-deoxy-D-xylulose 5-phosphate: step 1/6. In terms of biological role, catalyzes the NADPH-dependent rearrangement and reduction of 1-deoxy-D-xylulose-5-phosphate (DXP) to 2-C-methyl-D-erythritol 4-phosphate (MEP). The protein is 1-deoxy-D-xylulose 5-phosphate reductoisomerase of Acetivibrio thermocellus (strain ATCC 27405 / DSM 1237 / JCM 9322 / NBRC 103400 / NCIMB 10682 / NRRL B-4536 / VPI 7372) (Clostridium thermocellum).